The sequence spans 293 residues: Phosphoribosylaminoimidazole-succinocarboxamide synthase (293 aa).

The protein belongs to the SAICAR synthetase family.

It catalyses the reaction 5-amino-1-(5-phospho-D-ribosyl)imidazole-4-carboxylate + L-aspartate + ATP = (2S)-2-[5-amino-1-(5-phospho-beta-D-ribosyl)imidazole-4-carboxamido]succinate + ADP + phosphate + 2 H(+). It functions in the pathway purine metabolism; IMP biosynthesis via de novo pathway; 5-amino-1-(5-phospho-D-ribosyl)imidazole-4-carboxamide from 5-amino-1-(5-phospho-D-ribosyl)imidazole-4-carboxylate: step 1/2. This Bordetella parapertussis (strain 12822 / ATCC BAA-587 / NCTC 13253) protein is Phosphoribosylaminoimidazole-succinocarboxamide synthase.